The sequence spans 431 residues: Enolase (431 aa).

Glutamine 166 contacts (2R)-2-phosphoglycerate. The active-site Proton donor is glutamate 208. Positions 245, 288, and 315 each coordinate Mg(2+). The (2R)-2-phosphoglycerate site is built by lysine 340, arginine 369, serine 370, and lysine 391. The active-site Proton acceptor is the lysine 340.

It belongs to the enolase family. It depends on Mg(2+) as a cofactor.

Its subcellular location is the cytoplasm. It localises to the secreted. The protein localises to the cell surface. The enzyme catalyses (2R)-2-phosphoglycerate = phosphoenolpyruvate + H2O. It functions in the pathway carbohydrate degradation; glycolysis; pyruvate from D-glyceraldehyde 3-phosphate: step 4/5. Its function is as follows. Catalyzes the reversible conversion of 2-phosphoglycerate (2-PG) into phosphoenolpyruvate (PEP). It is essential for the degradation of carbohydrates via glycolysis. The chain is Enolase from Clostridium perfringens (strain ATCC 13124 / DSM 756 / JCM 1290 / NCIMB 6125 / NCTC 8237 / Type A).